The primary structure comprises 1527 residues: Lysophospholipase nte1 (1527 aa).

The Cytoplasmic portion of the chain corresponds to methionine 1–glycine 73. The chain crosses the membrane as a helical span at residues tryptophan 74–isoleucine 94. Residues threonine 95–threonine 116 lie on the Lumenal side of the membrane. Residues methionine 117–isoleucine 137 traverse the membrane as a helical segment. Residues arginine 138–isoleucine 1527 lie on the Cytoplasmic side of the membrane. Residues glycine 299–serine 310 show a composition bias toward low complexity. Disordered stretches follow at residues glycine 299 to serine 387, aspartate 567 to aspartate 596, and alanine 765 to serine 785. The span at arginine 364–serine 377 shows a compositional bias: polar residues. A nucleoside 3',5'-cyclic phosphate-binding positions include glycine 682–serine 809 and arginine 846–arginine 966. Positions leucine 1224–lysine 1388 constitute a PNPLA domain. Residues glycine 1228–glycine 1233 carry the GXGXXG motif. Positions glycine 1255–glycine 1259 match the GXSXG motif. Catalysis depends on serine 1257, which acts as the Nucleophile. The Proton acceptor role is filled by aspartate 1375. The short motif at aspartate 1375–glycine 1377 is the DGA/G element. Residues leucine 1504–isoleucine 1527 are disordered.

This sequence belongs to the NTE family.

It is found in the endoplasmic reticulum membrane. The enzyme catalyses a 1-acyl-sn-glycero-3-phosphocholine + H2O = sn-glycerol 3-phosphocholine + a fatty acid + H(+). Its activity is regulated as follows. Inhibited by organophosphorus esters. Its function is as follows. Intracellular phospholipase B that catalyzes the double deacylation of phosphatidylcholine (PC) to glycerophosphocholine (GroPCho). Plays an important role in membrane lipid homeostasis. Responsible for the rapid PC turnover in response to inositol, elevated temperatures, or when choline is present in the growth medium. The sequence is that of Lysophospholipase nte1 (nte1) from Emericella nidulans (strain FGSC A4 / ATCC 38163 / CBS 112.46 / NRRL 194 / M139) (Aspergillus nidulans).